A 260-amino-acid chain; its full sequence is Fructose import ATP-binding protein FrcA (260 aa).

The 245-residue stretch at 7-251 (LTARGLVKRY…DAVAFMTGAK (245 aa)) folds into the ABC transporter domain. Position 39–46 (39–46 (GDNGAGKS)) interacts with ATP.

The protein belongs to the ABC transporter superfamily. The complex is composed of two ATP-binding proteins (FrcA), two transmembrane proteins (FrcC) and a solute-binding protein (FrcB).

The protein localises to the cell inner membrane. It carries out the reaction D-fructose(out) + ATP + H2O = D-fructose(in) + ADP + phosphate + H(+). Its function is as follows. Part of the high-affinity ABC transporter complex FrcBCA involved in fructose uptake. Is also a high-affinity transporter for ribose and mannose. Responsible for energy coupling to the transport system. In Rhizobium meliloti (Ensifer meliloti), this protein is Fructose import ATP-binding protein FrcA.